The chain runs to 1441 residues: MFNRFRLVHKQLRLYKNFGLLGQKASVGLTLPIISLSRPYMAYMGTERSVVMITAPATKEFAESSERSNSSKKTTNKEQSDKSAESRMATSGIVESFPTGALVPKAETGVLNFLQKYPEYDGRDVTIAIFDSGVDPRATGLETLCDGKTVKVIERYDCSGCGDVDMKKKVTPDENGNIKGLSGNSLKLSPELMALNTDPEKAVRVGLKSFSDLLPSKVRNNIVAQAKLKHWDKPHKTATANASRKIVEFESQNPGEASKLPWDKKILKENLDFELEMLNSYEKVYGDIKTSYDCILFPTADGWLTIVDTTEQGDLDQALRIGEYSRTHETRNVDDFLSISVNVHDEGNVLEVVGMSSPHGTHVSSIASGNHSSRDVDGVAPNAKIVSMTIGDGRLGSMETGTALVRAMTKVMELCRDGRRIDVINMSYGEHANWSNSGRIGELMNEVVNKYGVVWVASAGNHGPALCTVGTPPDISQPSLIGVGAYVSPQMMEAEYAMREKLPGNVYTWTSRDPCIDGGQGVTVCAPGGAIASVPQFTMSKSQLMNGTSMAAPHVAGAVALLISGLKQQNIEYSPYSIKRAISVTATKLGYVDPFAQGHGLLNVEKAFEHLTEHRQSKDNMLRFSVRVGNNADKGIHLRQGVQRNSIDYNVYIEPIFYNDKEADPKDKFNFNVRLNLIASQPWVQCGAFLDLSYGTRSIAVRVDPTGLQPGVHSAVIRAYDTDCVQKGSLFEIPVTVVQPHVLESDQNTPVFEPASSKGDNSVEFQPNTIQRDFILVPERATWAELRMRITDPNRGEDIGKFFVHTNQLLPKQSCRKLETMKIVSVGSENESIMAFKVKSGRILELCIAKYWSNYGQSHLKYSLRFRGVEAHNPNAYVMHAGRGIHKLEIEALVAEDVQPQLQLKNAEVVLKPTEAKISPLSATRDVIPDGRQVYQNLLAFNLNVAKAADVSIYAPIFNDLLYEAEFESQMWMLFDANKALVATGDAHSHTSFTKLDKGEYTIRLQVRHEKRDLLEKISEANLVASFKLTSPLTLDFYENYNQCIVGGRKYVSSPLRLSTRVLYIAPITQERLTKANLPAQCAWLSGNLVFPQDEVGRRVAQHPFTYILNPAEKKSHTNGSSNGSSAAGSTATAAAVTTANGAKPKAPATPQAATSVTNPAAGDGISVQNDPPVDSSGSPASPKKGKANADDYAESFRDFQCSQIVKCELEMAEKIYNDVVAAHPKHLQANLLLIQNIESNQLKSQLPLTFVNAQKTSPPEAGESADKQKEDQKKVRSALERIVKLADKVIQETDSEALLSYYGLKNDTRADAAKIKTNMDKQKNTLIEALSKKGIAVAKLAVLDDCIKDSLAEINELYTEIIKFVDANDSKAIQFALWHAYAHGHYGRMYKYVVKLIEEKRTRDHFVELAAINGALGHEHIRTVINRMMITAFPSSFRLF.

The tract at residues 62–89 (AESSERSNSSKKTTNKEQSDKSAESRMA) is disordered. Residues 75-85 (TNKEQSDKSAE) are compositionally biased toward basic and acidic residues. Positions 107–608 (ETGVLNFLQK…HGLLNVEKAF (502 aa)) constitute a Peptidase S8 domain. Catalysis depends on charge relay system residues Asp131, His359, and Ser549. Residues 1139–1155 (TANGAKPKAPATPQAAT) are compositionally biased toward low complexity. 2 disordered regions span residues 1139–1190 (TANG…KANA) and 1255–1274 (QKTS…EDQK). Position 1182 is a phosphoserine (Ser1182). Basic and acidic residues predominate over residues 1265 to 1274 (SADKQKEDQK).

It belongs to the peptidase S8 family. Homooligomer; forms a complex of 6 MDa probably composed of 40 subunits. Forms a structure consisting of 2 segmented and twisted strands that form a spindle-shaped structure. Each strand is composed of 10 segments (a segment being a homodimer oriented head to head), stacking of these segments leads to the formation of a twisted single strand. 2 strands compose the fully assembled spindle.

It localises to the cytoplasm. The enzyme catalyses Release of an N-terminal tripeptide from a polypeptide.. With respect to regulation, inhibited by phenylmethanesulfonyl fluoride (PMSF) and butabindide, but not by peptidase inhibitor pepstatin, EDTA, nor bestatin. In terms of biological role, component of the proteolytic cascade acting downstream of the 26S proteasome in the ubiquitin-proteasome pathway. Efficiently cleaves Ala-Ala-Ala-polypeptide and Pro-Pro-Ala-polypeptide, Val-Leu-Lys-polypeptide only at high concentration. Does not cleave Ala-Phe-Pro-polypeptide nor Pro-Leu-Gly-polypeptide. This chain is Tripeptidyl-peptidase 2 (TppII), found in Drosophila melanogaster (Fruit fly).